Consider the following 1101-residue polypeptide: Leucine-rich repeat receptor-like serine/threonine-protein kinase At1g17230 (1101 aa).

A signal peptide spans 1–23; it reads MRGRICFLAIVILCSFSFILVRS. Residues 24 to 734 are Extracellular-facing; it reads LNEEGRVLLE…WLINGSQRQK (711 aa). N-linked (GlcNAc...) asparagine glycans are attached at residues asparagine 39, asparagine 57, asparagine 78, and asparagine 97. 26 LRR repeats span residues 66–90, 91–115, 117–137, 138–162, 163–186, 188–210, 211–234, 235–258, 260–282, 283–306, 308–329, 330–354, 355–379, 381–402, 403–426, 427–450, 451–474, 476–498, 499–522, 524–546, 548–569, 570–593, 595–618, 619–643, 644–667, and 669–692; these read LRTV…ICKL, HGLR…SLCR, LEVL…QLTM, IITL…IGNL, SSLQ…MAKL, QLRI…ISGC, ESLK…LEKL, QNLT…VGNI, RLEV…IGKL, TKMK…IGNL, DAAE…EFGH, ILNL…LGEL, TLLE…QFLP, LVDL…IGFY, SNFS…FCRF, QTLI…LKTC, KSLT…LFNL, NLTA…LGKL, KNLE…IGNL, KIVG…LGSC, TIQR…ELGQ, LVYL…SFGD, TRLM…LGKL, TSLQ…LGNL, QMLE…IGNL, and SLLI…VFQR. Residues asparagine 161 and asparagine 174 are each glycosylated (N-linked (GlcNAc...) asparagine). Asparagine 236 and asparagine 257 each carry an N-linked (GlcNAc...) asparagine glycan. A glycan (N-linked (GlcNAc...) asparagine) is linked at asparagine 368. An N-linked (GlcNAc...) asparagine glycan is attached at asparagine 404. N-linked (GlcNAc...) asparagine glycans are attached at residues asparagine 476, asparagine 490, asparagine 510, asparagine 521, and asparagine 529. N-linked (GlcNAc...) asparagine glycosylation is found at asparagine 626 and asparagine 631. N-linked (GlcNAc...) asparagine glycans are attached at residues asparagine 674 and asparagine 728. Residues 735–755 traverse the membrane as a helical segment; it reads ILTITCIVIGSVFLITFLGLC. The Cytoplasmic segment spans residues 756 to 1101; it reads WTIKRREPAF…LEEANSSKEI (346 aa). Phosphothreonine is present on residues threonine 788 and threonine 796. Residues 799–1081 form the Protein kinase domain; it reads FSEDVVLGRG…ITEARGSSSL (283 aa). Residues 805–813 and lysine 827 contribute to the ATP site; that span reads LGRGACGTV. Phosphotyrosine occurs at positions 874 and 913. Aspartate 926 (proton acceptor) is an active-site residue. Serine 960 carries the phosphoserine modification. Residues tyrosine 968 and tyrosine 975 each carry the phosphotyrosine modification. Threonine 976 bears the Phosphothreonine mark. The segment at 1076–1101 is disordered; the sequence is RGSSSLSSSSITSETPLEEANSSKEI. The segment covering 1078–1088 has biased composition (low complexity); sequence SSSLSSSSITS.

Belongs to the protein kinase superfamily. Ser/Thr protein kinase family.

Its subcellular location is the cell membrane. It catalyses the reaction L-seryl-[protein] + ATP = O-phospho-L-seryl-[protein] + ADP + H(+). The enzyme catalyses L-threonyl-[protein] + ATP = O-phospho-L-threonyl-[protein] + ADP + H(+). This Arabidopsis thaliana (Mouse-ear cress) protein is Leucine-rich repeat receptor-like serine/threonine-protein kinase At1g17230.